A 336-amino-acid polypeptide reads, in one-letter code: DNA polymerase beta (336 aa).

The K(+) site is built by lysine 59, leucine 61, and valine 64. The Na(+) site is built by lysine 59, leucine 61, and valine 64. Lysine 71 acts as the Nucleophile; Schiff-base intermediate with DNA; for 5'-dRP lyase activity in catalysis. Omega-N-methylarginine; by PRMT6 is present on arginine 82. The K(+) site is built by threonine 100, valine 102, and isoleucine 105. 3 residues coordinate Na(+): threonine 100, valine 102, and isoleucine 105. Arginine 148 contributes to the a 2'-deoxyribonucleoside 5'-triphosphate binding site. An Omega-N-methylarginine; by PRMT6 modification is found at arginine 151. 4 residues coordinate a 2'-deoxyribonucleoside 5'-triphosphate: serine 179, arginine 182, glycine 188, and aspartate 189. Residues 182 to 191 (RGAESSGDID) are DNA-binding. Mg(2+)-binding residues include aspartate 189, aspartate 191, and aspartate 257.

This sequence belongs to the DNA polymerase type-X family. Mg(2+) is required as a cofactor. Methylation by PRMT6 stimulates the polymerase activity by enhancing DNA binding and processivity. In terms of processing, ubiquitinated: monoubiquitinated by huwe1/arf-bp1. Monoubiquitinated protein is then the target of stub1/chip, which catalyzes polyubiquitination from monoubiquitin, leading to degradation by the proteasome. usp47 mediates the deubiquitination of monoubiquitinated protein, preventing polyubiquitination by STUB1/CHIP and its subsequent degradation.

The protein resides in the nucleus. Its subcellular location is the cytoplasm. It catalyses the reaction DNA(n) + a 2'-deoxyribonucleoside 5'-triphosphate = DNA(n+1) + diphosphate. The catalysed reaction is a 5'-end 2'-deoxyribose-2'-deoxyribonucleotide-DNA = (2E,4S)-4-hydroxypenten-2-al-5-phosphate + a 5'-end 5'-phospho-2'-deoxyribonucleoside-DNA + H(+). The enzyme catalyses 2'-deoxyribonucleotide-(2'-deoxyribose 5'-phosphate)-2'-deoxyribonucleotide-DNA = a 3'-end 2'-deoxyribonucleotide-(2,3-dehydro-2,3-deoxyribose 5'-phosphate)-DNA + a 5'-end 5'-phospho-2'-deoxyribonucleoside-DNA + H(+). Repair polymerase that plays a key role in base-excision repair. During this process, the damaged base is excised by specific DNA glycosylases, the DNA backbone is nicked at the abasic site by an apurinic/apyrimidic (AP) endonuclease, and POLB removes 5'-deoxyribose-phosphate from the preincised AP site acting as a 5'-deoxyribose-phosphate lyase (5'-dRP lyase); through its DNA polymerase activity, it adds one nucleotide to the 3' end of the arising single-nucleotide gap. Conducts 'gap-filling' DNA synthesis in a stepwise distributive fashion rather than in a processive fashion as for other DNA polymerases. It is also able to cleave sugar-phosphate bonds 3' to an intact AP site, acting as an AP lyase. The chain is DNA polymerase beta (polb) from Danio rerio (Zebrafish).